A 464-amino-acid chain; its full sequence is MMARRDPTSWAKRLVRAQTLQKQRRAPVGPRAPPPDEEDPRLKCKNCGAFGHTARSTRCPMKCWKAALVPATLGKKEGKENLKPWKPRGEANPGPLNKDKGEKEERPRQQDPQRKALLHMFSGKPPEKPLPNGKGSTESSDYLRVASGPMPVHTTSKRPRLDPVLADRSATEMSGRGSVLASLSPLRKASLSSSSSLGPKERQTGAAADMPQPAVRHQGREPLLVVKPTHSRPEGGCREVPQAASKTHGLLQASRPQAQDKRPAVTPQPCPPAATHSLGLGSNLSFGPGAKRPAQAPIQACLNFPKKPRLGPFQIPESAIQGGELGAPENLQPPPAATELGPSTSPQMGRRTPAQVPSVDRQPPHSRPCLPTAQACTMSHHSAAGHDGAQPLRVLFRRLENGRWSSSLLAAPSFHSPEKPGAFLAQSPHVSEKSEAPCVRVPPSVLYEDLQVSSSSEDSDSDLE.

Disordered regions lie at residues 1 to 42 (MMAR…DPRL), 69 to 389 (VPAT…HDGA), and 415 to 437 (HSPE…SEAP). 2 stretches are compositionally biased toward basic and acidic residues: residues 74 to 89 (GKKE…KPRG) and 97 to 114 (NKDK…DPQR). Residues 180–197 (LASLSPLRKASLSSSSSL) are compositionally biased toward low complexity.

It belongs to the FAM90 family.

The chain is Protein FAM90A24 from Homo sapiens (Human).